The following is a 123-amino-acid chain: Large ribosomal subunit protein bL12 (123 aa).

The protein belongs to the bacterial ribosomal protein bL12 family. As to quaternary structure, homodimer. Part of the ribosomal stalk of the 50S ribosomal subunit. Forms a multimeric L10(L12)X complex, where L10 forms an elongated spine to which 2 to 4 L12 dimers bind in a sequential fashion. Binds GTP-bound translation factors.

In terms of biological role, forms part of the ribosomal stalk which helps the ribosome interact with GTP-bound translation factors. Is thus essential for accurate translation. The polypeptide is Large ribosomal subunit protein bL12 (Acholeplasma laidlawii (strain PG-8A)).